Here is a 143-residue protein sequence, read N- to C-terminus: Large ribosomal subunit protein uL11 (143 aa).

The protein belongs to the universal ribosomal protein uL11 family. In terms of assembly, part of the ribosomal stalk of the 50S ribosomal subunit. Interacts with L10 and the large rRNA to form the base of the stalk. L10 forms an elongated spine to which L12 dimers bind in a sequential fashion forming a multimeric L10(L12)X complex. In terms of processing, one or more lysine residues are methylated.

Forms part of the ribosomal stalk which helps the ribosome interact with GTP-bound translation factors. The sequence is that of Large ribosomal subunit protein uL11 from Paenarthrobacter aurescens (strain TC1).